Consider the following 511-residue polypeptide: NAD(P)H-quinone oxidoreductase subunit 2, chloroplastic (511 aa).

The next 14 helical transmembrane spans lie at 15–35 (LLPEGIVTILLVFILLIDLTF), 39–59 (VLSWLLYIPLVGLVCSMVVLL), 78–98 (SLSIAFRFFILLSAVLCILLS), 108–128 (ALTEFFVLLLTAVIGGMLLSG), 132–152 (LIMIFLSLETLGLSSYLLTGY), 167–187 (LLIGAASSSILLYGLSLLYGL), 210–230 (FASWVALIFITVGIGFKVAAA), 244–264 (PTPVVAFLSVGSKAAGLALAT), 278–298 (WHLLFQVLASLSMILGNLIAI), 306–326 (MLGYSSVSQAGFLMIGLIAGN), 334–354 (LVYMLLYIFMNLGAFACIILF), 377–397 (VFCFSISLLSLGGIPPLAGFF), 410–430 (GFYILVFIGLFTSVISIYYYL), and 466–486 (LGIGLCVLGSVLAGVLVNPII).

This sequence belongs to the complex I subunit 2 family. In terms of assembly, NDH is composed of at least 16 different subunits, 5 of which are encoded in the nucleus.

It is found in the plastid. The protein resides in the chloroplast thylakoid membrane. The catalysed reaction is a plastoquinone + NADH + (n+1) H(+)(in) = a plastoquinol + NAD(+) + n H(+)(out). It catalyses the reaction a plastoquinone + NADPH + (n+1) H(+)(in) = a plastoquinol + NADP(+) + n H(+)(out). NDH shuttles electrons from NAD(P)H:plastoquinone, via FMN and iron-sulfur (Fe-S) centers, to quinones in the photosynthetic chain and possibly in a chloroplast respiratory chain. The immediate electron acceptor for the enzyme in this species is believed to be plastoquinone. Couples the redox reaction to proton translocation, and thus conserves the redox energy in a proton gradient. The chain is NAD(P)H-quinone oxidoreductase subunit 2, chloroplastic from Chlorokybus atmophyticus (Soil alga).